The chain runs to 112 residues: Tyrosine-protein phosphatase 17 (112 aa).

The Tyrosine-protein phosphatase domain occupies 1 to 112 (WRMIWEHECC…QPHTAGPIVV (112 aa)). Residue D82 coordinates substrate.

It belongs to the protein-tyrosine phosphatase family.

The enzyme catalyses O-phospho-L-tyrosyl-[protein] + H2O = L-tyrosyl-[protein] + phosphate. The polypeptide is Tyrosine-protein phosphatase 17 (STY-17) (Styela plicata (Wrinkled sea squirt)).